Reading from the N-terminus, the 931-residue chain is Netrin receptor UNC5C (931 aa).

An N-terminal signal peptide occupies residues 1-40; it reads MRKGLRATAARCGLGLGYLLQMLVLPALALLSASGTGSAA. Residues 41 to 380 lie on the Extracellular side of the membrane; that stretch reads QDDDFFHELP…APDSDDVALY (340 aa). The 98-residue stretch at 62 to 159 folds into the Ig-like domain; sequence PHFLIEPEEA…AGTTKSRKAY (98 aa). 9 disulfide bridges follow: cysteine 83–cysteine 144, cysteine 95–cysteine 142, cysteine 188–cysteine 239, cysteine 272–cysteine 309, cysteine 276–cysteine 313, cysteine 287–cysteine 299, cysteine 328–cysteine 362, cysteine 332–cysteine 367, and cysteine 340–cysteine 352. Positions 161 to 256 constitute an Ig-like C2-type domain; that stretch reads RIAYLRKTFE…KRKSTTATVI (96 aa). The N-linked (GlcNAc...) asparagine glycan is linked to asparagine 236. TSP type-1 domains are found at residues 260–314 and 316–368; these read NGGW…TLCP and DGRW…GLCM. Asparagine 361 carries N-linked (GlcNAc...) asparagine glycosylation. The chain crosses the membrane as a helical span at residues 381 to 401; the sequence is VGIVIAVIVCLAISVVVALFV. At 402 to 931 the chain is on the cytoplasmic side; it reads YRKNHRDFES…VVSLAAEGQY (530 aa). Positions 402-931 are required for netrin-mediated axon repulsion of neuronal growth cones; the sequence is YRKNHRDFES…VVSLAAEGQY (530 aa). Serine 502 bears the Phosphoserine mark. The 144-residue stretch at 530-673 folds into the ZU5 domain; sequence CTAFGSFNSL…LSTYALVGHS (144 aa). Tyrosine 568 is subject to Phosphotyrosine. The tract at residues 694 to 712 is interaction with DCC; it reads SLEYSIRVYCLDDTQDALK. The Death domain occupies 850 to 929; the sequence is QKLCSSLDAP…ETVVSLAAEG (80 aa).

The protein belongs to the unc-5 family. As to quaternary structure, interacts with DCC (via cytoplasmic domain). Interacts (tyrosine phosphorylated form) with PTPN11. Interacts (via extracellular domain) with FLRT3 (via extracellular domain). Interacts (via Ig-like C2-type domain) with DSCAM (via extracellular domain). Interacts (via death domain) with DAPK1. Interacts (via cytoplasmic domain) with TUBB3; this interaction is decreased by NTN1/Netrin-1. In terms of processing, proteolytically cleaved by caspases during apoptosis. The cleavage does not take place when the receptor is associated with netrin ligand. Its cleavage by caspases is required to induce apoptosis. Post-translationally, phosphorylated on different cytoplasmic tyrosine residues. Phosphorylation of Tyr-568 leads to an interaction with PTPN11 phosphatase, suggesting that its activity is regulated by phosphorylation/dephosphorylation. Tyrosine phosphorylation is netrin-dependent. Mainly expressed in brain. Expressed in temporal lobe cortical neurons and in neurons of the hippocampal pyramidal layer. Also expressed in kidney. Not expressed in developing or adult lung.

It is found in the cell membrane. The protein localises to the cell surface. It localises to the synapse. The protein resides in the synaptosome. Its subcellular location is the cell projection. It is found in the axon. The protein localises to the dendrite. It localises to the growth cone. The protein resides in the lamellipodium. Its subcellular location is the filopodium. Functionally, receptor for netrin required for axon guidance. Mediates axon repulsion of neuronal growth cones in the developing nervous system upon ligand binding. NTN1/Netrin-1 binding might cause dissociation of UNC5C from polymerized TUBB3 in microtubules and thereby lead to increased microtubule dynamics and axon repulsion. Axon repulsion in growth cones may also be caused by its association with DCC that may trigger signaling for repulsion. Might also collaborate with DSCAM in NTN1-mediated axon repulsion independently of DCC. Also involved in corticospinal tract axon guidance independently of DCC. Involved in dorsal root ganglion axon projection towards the spinal cord. It also acts as a dependence receptor required for apoptosis induction when not associated with netrin ligand. In Homo sapiens (Human), this protein is Netrin receptor UNC5C (UNC5C).